A 369-amino-acid chain; its full sequence is Putative gustatory receptor 39b (369 aa).

Residues 1–32 are Cytoplasmic-facing; the sequence is MLYSFHPYLKYFALLGLVPWSESCAQSKFVQK. The helical transmembrane segment at 33–53 threads the bilayer; sequence VYSAILIILNAVHFGISIYFP. The Extracellular segment spans residues 54 to 59; that stretch reads QSAELF. Residues 60 to 80 form a helical membrane-spanning segment; it reads LSLMVNVIVFVARIVCVTVII. Residues 81-122 are Cytoplasmic-facing; sequence LQVMVHYDDYFRFCREMKYLGLRLQCELKIHVGRLKWQSYAK. Residues 123–143 traverse the membrane as a helical segment; the sequence is ILALGIGFLVTVLPSIYVALS. At 144 to 147 the chain is on the extracellular side; that stretch reads GSLL. The chain crosses the membrane as a helical span at residues 148-168; the sequence is YFWSSLLSILIIRMQFVLVLL. Topologically, residues 169-224 are cytoplasmic; the sequence is NVELLGHHVSLLGIRLQNVLECHLMGANCTLDGNANRLCSLEFLLALKQSHMQLHY. The chain crosses the membrane as a helical span at residues 225–245; sequence LFTHFNDLFGWSILGTYVVLF. At 246 to 265 the chain is on the extracellular side; sequence SDSTVNIYWTQQVLVEVYEY. The helical transmembrane segment at 266-286 threads the bilayer; sequence KYLYATFSVFVPSFFNILVFC. Residues 287-348 lie on the Cytoplasmic side of the membrane; that stretch reads RCGEFCQRQS…EGFMSTDNSL (62 aa). A helical membrane pass occupies residues 349-368; the sequence is LMSILAAKVTYLIVLMQFSS. V369 is a topological domain (extracellular).

It belongs to the insect chemoreceptor superfamily. Gustatory receptor (GR) family. Gr2a subfamily. In terms of tissue distribution, expressed in the adult labellar chemosensory neurons and in abdominal ganglions. In larvae, is expressed in neurons of the dorsal and posterior pharyngeal sense organs.

It is found in the cell membrane. Functionally, probable gustatory receptor which mediates acceptance or avoidance behavior, depending on its substrates. Has also atypical sensory function in organ not limited to conventional taste sensing like abdominal ganglions. This chain is Putative gustatory receptor 39b (Gr39b), found in Drosophila melanogaster (Fruit fly).